The primary structure comprises 950 residues: MLSSWQGGPRPRQLLLWLLILAAWETGSGQLHYSVPEEAKHGTFVGRIAQDLGLELAELVPRLFRVASKRHGDLLEVNLQNGILFVNSRIDREELCGRSAECSIHLEVIVDRPLQVFHVEVKVRDINDNPPIFPESKKRIIIAESRPPETRFPLDGASDADIGVNSALTYRLDPNDYFTLDAQNSLEQMSSLSLVLRKTLDREEIQEHSLLLTASDGGKPELTGTVQLLITILDVNDNAPEFYQSVYKVTVLENAFNGTLVIKLNATDPDDGTNGDIVYSFRRPVWPAVVYAFTINPNNGEIRTKGKLDFEEKKLYEISVEAVDKGNIPMAGHCTLLVEVLDVNDNAPEVTITSLSLPIREDTQPSAIIALISVSDRDSGSNGQVTCTLTPHVPFKLVSTYKNYYSLVLDSALDRESVSAYELVVTARDGGSPSLWATASVSVGVADVNDNAPAFAQPEYTVFVKENNPPGCHIFTVSAQDADAQENALVSYSLVERRVGERALSSYVSVHAESGKVYALQPLDHEELELLQFQVSARDSGVPPLGSNVTLQVFVLDENDNAPALLTPGAGSAGGTVSELMPRSVGAGHVVAKVRAVDADSGYNAWLSYELQLAAVGARIPFRVGLYTGEISTTRPLDEVDAPHHRLLVLVKDHGEPALTATATVLLSLVESGQAPQASSRASAGAVGPEAALVDVNVYLIIAICAVSSLLVLTLLLYTALRCSAPPTEGACAPGKPTLVCSSAAGSWSYSQQRRPRVCSGEGPHKTDLMAFSPSLPPCLGSAEGTGQREEDSECLKEPRQPNPDWRYSASLRAGMHSSVHLEEAGILRAGPGGPDQQWPTVSSATPEPEAGEVSPPVGAGVNSNSWTFKYGPGNPKQSGPGELPDKFIIPGSPAIISIRQEPTNSQIDKSDFITFGKKEETKKKKKKKKGNKTQEKKEKGNSTTDNSDQ.

The signal sequence occupies residues 1 to 29 (MLSSWQGGPRPRQLLLWLLILAAWETGSG). The Extracellular portion of the chain corresponds to 30-697 (QLHYSVPEEA…GPEAALVDVN (668 aa)). Cadherin domains are found at residues 34–133 (SVPE…PPIF), 134–242 (PESK…APEF), 243–350 (YQSV…APEV), 351–455 (TITS…APAF), 456–565 (AQPE…APAL), and 581–678 (MPRS…APQA). N-linked (GlcNAc...) asparagine glycosylation is found at N257 and N265. N548 carries an N-linked (GlcNAc...) asparagine glycan. Residues 698–718 (VYLIIAICAVSSLLVLTLLLY) form a helical membrane-spanning segment. Over 719–950 (TALRCSAPPT…GNSTTDNSDQ (232 aa)) the chain is Cytoplasmic. PXXP repeat units follow at residues 734-737 (PGKP), 774-777 (PSLP), 799-802 (PRQP), 832-835 (PGGP), 873-876 (PGNP), and 891-894 (PGSP). Positions 734-894 (PGKPTLVCSS…PDKFIIPGSP (161 aa)) are 6 X 4 AA repeats of P-X-X-P. Disordered stretches follow at residues 780-806 (LGSA…NPDW) and 829-950 (RAGP…NSDQ). The segment covering 787–800 (GQREEDSECLKEPR) has biased composition (basic and acidic residues). The span at 909–923 (DKSDFITFGKKEETK) shows a compositional bias: basic and acidic residues.

The protein localises to the cell membrane. Functionally, potential calcium-dependent cell-adhesion protein. May be involved in the establishment and maintenance of specific neuronal connections in the brain. The chain is Protocadherin alpha-13 (PCDHA13) from Homo sapiens (Human).